We begin with the raw amino-acid sequence, 586 residues long: U-box domain-containing protein 73 (586 aa).

A disordered region spans residues 21–122; it reads KADMSGLQRS…AAGADDGPTR (102 aa). A compositionally biased stretch (low complexity) spans 50–60; the sequence is RSAPTSPLRTP. Residues 182 to 258 enclose the U-box domain; that stretch reads PIPIAHDGTL…SAWCLDHSDL (77 aa).

The enzyme catalyses S-ubiquitinyl-[E2 ubiquitin-conjugating enzyme]-L-cysteine + [acceptor protein]-L-lysine = [E2 ubiquitin-conjugating enzyme]-L-cysteine + N(6)-ubiquitinyl-[acceptor protein]-L-lysine.. The protein operates within protein modification; protein ubiquitination. Functionally, possesses E3 ubiquitin-protein ligase in vitro. This is U-box domain-containing protein 73 (PUB73) from Oryza sativa subsp. japonica (Rice).